Reading from the N-terminus, the 209-residue chain is Ubiquitin-conjugating enzyme E2 S (209 aa).

The UBC core domain occupies 14–160 (QTIRQVMREL…ARMMTEIHAQ (147 aa)). Cys98 (glycyl thioester intermediate) is an active-site residue. Positions 168-194 (AVGDAKDDGGPSTKKHAGLDKKLQDKK) are disordered. The span at 184–194 (AGLDKKLQDKK) shows a compositional bias: basic and acidic residues.

Belongs to the ubiquitin-conjugating enzyme family.

The catalysed reaction is S-ubiquitinyl-[E1 ubiquitin-activating enzyme]-L-cysteine + [E2 ubiquitin-conjugating enzyme]-L-cysteine = [E1 ubiquitin-activating enzyme]-L-cysteine + S-ubiquitinyl-[E2 ubiquitin-conjugating enzyme]-L-cysteine.. It functions in the pathway protein modification; protein ubiquitination. Catalyzes the covalent attachment of ubiquitin to other proteins. Acts as an essential factor of the anaphase promoting complex/cyclosome (APC/C), a cell cycle-regulated ubiquitin ligase that controls progression through mitosis. Acts by specifically elongating polyubiquitin chains initiated by the E2 enzyme vih/UbcH10 on APC/C substrates, enhancing the degradation of APC/C substrates by the proteasome and promoting mitotic exit. The sequence is that of Ubiquitin-conjugating enzyme E2 S from Drosophila melanogaster (Fruit fly).